The primary structure comprises 144 residues: Austinoid biosynthesis cluster protein S (144 aa).

Belongs to the trt14 isomerase family. Homodimer.

It participates in secondary metabolite biosynthesis; terpenoid biosynthesis. Part of the gene cluster that mediates the biosynthesis of calidodehydroaustin, a fungal meroterpenoid. The first step of the pathway is the synthesis of 3,5-dimethylorsellinic acid by the polyketide synthase ausA. 3,5-dimethylorsellinic acid is then prenylated by the polyprenyl transferase ausN. Further epoxidation by the FAD-dependent monooxygenase ausM and cyclization by the probable terpene cyclase ausL lead to the formation of protoaustinoid A. Protoaustinoid A is then oxidized to spiro-lactone preaustinoid A3 by the combined action of the FAD-binding monooxygenases ausB and ausC, and the dioxygenase ausE. Acid-catalyzed keto-rearrangement and ring contraction of the tetraketide portion of preaustinoid A3 by ausJ lead to the formation of preaustinoid A4. The aldo-keto reductase ausK, with the help of ausH, is involved in the next step by transforming preaustinoid A4 into isoaustinone which is in turn hydroxylated by the P450 monooxygenase ausI to form austinolide. The cytochrome P450 monooxygenase ausG modifies austinolide to austinol. Austinol is further acetylated to austin by the O-acetyltransferase ausP, which spontaneously changes to dehydroaustin. The cytochrome P450 monooxygenase ausR then converts dehydroaustin is into 7-dehydrodehydroaustin. The hydroxylation catalyzed by ausR permits the O-acetyltransferase ausQ to add an additional acetyl group to the molecule, leading to the formation of acetoxydehydroaustin. The short chain dehydrogenase ausT catalyzes the reduction of the double bond present between carbon atoms 1 and 2 to convert 7-dehydrodehydroaustin into 1,2-dihydro-7-hydroxydehydroaustin. AusQ catalyzes not only an acetylation reaction but also the addition of the PKS ausV diketide product to 1,2-dihydro-7-hydroxydehydroaustin, forming precalidodehydroaustin. Finally, the iron/alpha-ketoglutarate-dependent dioxygenase converts precalidodehydroaustin into calidodehydroaustin. AusS is necessary for austinoids production and may play a possible function as a regulator. Functionally, may play a possible function as a regulator. This chain is Austinoid biosynthesis cluster protein S, found in Aspergillus calidoustus.